Reading from the N-terminus, the 136-residue chain is Histone H2A (136 aa).

Residues 1–11 (MTGGGKSGGKA) show a composition bias toward gly residues. Residues 1–24 (MTGGGKSGGKASGSKNAQSRSSKA) form a disordered region. Residues K6 and K10 each carry the N6-acetyllysine modification. Position 107 is an N5-methylglutamine (Q107). S133 is subject to Phosphoserine. A [ST]-Q motif motif is present at residues 133–134 (SQ).

This sequence belongs to the histone H2A family. The nucleosome is a histone octamer containing two molecules each of H2A, H2B, H3 and H4 assembled in one H3-H4 heterotetramer and two H2A-H2B heterodimers. The octamer wraps approximately 147 bp of DNA. In terms of processing, phosphorylated to form H2AS128ph (gamma-H2A) in response to DNA double-strand breaks (DSBs) generated by exogenous genotoxic agents and by stalled replication forks. Phosphorylation is dependent on the DNA damage checkpoint kinases MEC1/ATR and TEL1/ATM, spreads on either side of a detected DSB site and may mark the surrounding chromatin for recruitment of proteins required for DNA damage signaling and repair. Gamma-H2A is removed from the DNA prior to the strand invasion-primer extension step of the repair process and subsequently dephosphorylated. Dephosphorylation is necessary for efficient recovery from the DNA damage checkpoint. Post-translationally, acetylated by ESA1 to form H2AK4ac and H2AK7ac.

The protein localises to the nucleus. It is found in the chromosome. Functionally, core component of nucleosome which plays a central role in DNA double strand break (DSB) repair. Nucleosomes wrap and compact DNA into chromatin, limiting DNA accessibility to the cellular machineries which require DNA as a template. Histones thereby play a central role in transcription regulation, DNA repair, DNA replication and chromosomal stability. DNA accessibility is regulated via a complex set of post-translational modifications of histones, also called histone code, and nucleosome remodeling. The chain is Histone H2A (HTA1) from Pyricularia oryzae (strain Y34) (Rice blast fungus).